The sequence spans 237 residues: Purine nucleoside phosphorylase DeoD-type (237 aa).

His-4 contacts a purine D-ribonucleoside. Phosphate-binding positions include Gly-20, Arg-24, Arg-43, and 87–90; that span reads RVGT. A purine D-ribonucleoside-binding positions include 179–181 and 203–204; these read EME and SD. Asp-204 functions as the Proton donor in the catalytic mechanism.

Belongs to the PNP/UDP phosphorylase family. In terms of assembly, homohexamer; trimer of homodimers.

The catalysed reaction is a purine D-ribonucleoside + phosphate = a purine nucleobase + alpha-D-ribose 1-phosphate. The enzyme catalyses a purine 2'-deoxy-D-ribonucleoside + phosphate = a purine nucleobase + 2-deoxy-alpha-D-ribose 1-phosphate. Functionally, catalyzes the reversible phosphorolytic breakdown of the N-glycosidic bond in the beta-(deoxy)ribonucleoside molecules, with the formation of the corresponding free purine bases and pentose-1-phosphate. This Streptococcus uberis (strain ATCC BAA-854 / 0140J) protein is Purine nucleoside phosphorylase DeoD-type.